The primary structure comprises 369 residues: Cobalt-precorrin-5B C(1)-methyltransferase (369 aa).

The protein belongs to the CbiD family.

The enzyme catalyses Co-precorrin-5B + S-adenosyl-L-methionine = Co-precorrin-6A + S-adenosyl-L-homocysteine. It participates in cofactor biosynthesis; adenosylcobalamin biosynthesis; cob(II)yrinate a,c-diamide from sirohydrochlorin (anaerobic route): step 6/10. In terms of biological role, catalyzes the methylation of C-1 in cobalt-precorrin-5B to form cobalt-precorrin-6A. This is Cobalt-precorrin-5B C(1)-methyltransferase from Brucella melitensis biotype 1 (strain ATCC 23456 / CCUG 17765 / NCTC 10094 / 16M).